Reading from the N-terminus, the 351-residue chain is MTISAVPGTIILAIETSCDETGVGIACLDDYGTVTLLADEVASSVDEQARFGGVVPEIASRAHLEALGPTIRCALAAAGLTGSAKPDVVAATIGPGLAGALLVGVAAAKAYSAAWGVPFYAVNHLGGHLAADVYEHGPLPECVALLVSGGHTHLLQVRSLGAPIVELGSTVDDAAGEAYDKVARLLGLGYPGGKVLDDLARTGDRDAIVFPRGMTGPADDLNAFSFSGLKTAVARYVESHPDALPADVAAGFQEAVADVLTMKAVRAATGLGVSTLLIVGGVAANSRLRELAAQRCAAAGLMLRIPGPRFCTDNGAMIAAFAAHLLAAAAPPSPLDVPSDPGLPVVKRQIN.

Fe cation contacts are provided by His124 and His128. Substrate-binding positions include Leu146–Gly150, Asp180, Gly193, Asp197, and Asn285. Asp313 is a Fe cation binding site.

The protein belongs to the KAE1 / TsaD family. Fe(2+) is required as a cofactor.

Its subcellular location is the cytoplasm. The catalysed reaction is L-threonylcarbamoyladenylate + adenosine(37) in tRNA = N(6)-L-threonylcarbamoyladenosine(37) in tRNA + AMP + H(+). Functionally, required for the formation of a threonylcarbamoyl group on adenosine at position 37 (t(6)A37) in tRNAs that read codons beginning with adenine. Is involved in the transfer of the threonylcarbamoyl moiety of threonylcarbamoyl-AMP (TC-AMP) to the N6 group of A37, together with TsaE and TsaB. TsaD likely plays a direct catalytic role in this reaction. This chain is tRNA N6-adenosine threonylcarbamoyltransferase, found in Mycobacterium leprae (strain TN).